The primary structure comprises 1653 residues: Protein TOPAZ1 (1653 aa).

Disordered regions lie at residues 1-94 (MRPP…TDLV), 284-303 (YSVE…KSGK), and 415-442 (ISST…SETE). Positions 63–78 (GREETEGDKLAKENGK) are enriched in basic and acidic residues. Basic and acidic residues predominate over residues 423–442 (SDGHHMEKRSPRGDLRSETE).

In terms of tissue distribution, restricted to testis, where it localizes to germ cells.

The protein resides in the cytoplasm. The protein localises to the cytosol. Functionally, important for normal spermatogenesis and male fertility. Specifically required for progression to the post-meiotic stages of spermatocyte development. Seems to be necessary for normal expression levels of a number of testis-expressed gene transcripts, although its role in this process is unclear. The protein is Protein TOPAZ1 of Mus musculus (Mouse).